We begin with the raw amino-acid sequence, 1203 residues long: DNA-directed RNA polymerase subunit beta (1203 aa).

Positions 1167–1203 (LSKYAQQQEEQRKAAAQTDESKTAPATKNESQPNTQD) are disordered. Residues 1190–1203 (APATKNESQPNTQD) show a composition bias toward polar residues.

The protein belongs to the RNA polymerase beta chain family. In terms of assembly, the RNAP catalytic core consists of 2 alpha, 1 beta, 1 beta' and 1 omega subunit. When a sigma factor is associated with the core the holoenzyme is formed, which can initiate transcription.

The enzyme catalyses RNA(n) + a ribonucleoside 5'-triphosphate = RNA(n+1) + diphosphate. Its function is as follows. DNA-dependent RNA polymerase catalyzes the transcription of DNA into RNA using the four ribonucleoside triphosphates as substrates. In Levilactobacillus brevis (strain ATCC 367 / BCRC 12310 / CIP 105137 / JCM 1170 / LMG 11437 / NCIMB 947 / NCTC 947) (Lactobacillus brevis), this protein is DNA-directed RNA polymerase subunit beta.